A 431-amino-acid polypeptide reads, in one-letter code: Glutamate-1-semialdehyde 2,1-aminomutase (431 aa).

Lys269 carries the N6-(pyridoxal phosphate)lysine modification.

This sequence belongs to the class-III pyridoxal-phosphate-dependent aminotransferase family. HemL subfamily. In terms of assembly, homodimer. Requires pyridoxal 5'-phosphate as cofactor.

The protein resides in the cytoplasm. It carries out the reaction (S)-4-amino-5-oxopentanoate = 5-aminolevulinate. Its pathway is porphyrin-containing compound metabolism; protoporphyrin-IX biosynthesis; 5-aminolevulinate from L-glutamyl-tRNA(Glu): step 2/2. It functions in the pathway porphyrin-containing compound metabolism; chlorophyll biosynthesis. The protein is Glutamate-1-semialdehyde 2,1-aminomutase of Chlorobaculum parvum (strain DSM 263 / NCIMB 8327) (Chlorobium vibrioforme subsp. thiosulfatophilum).